The primary structure comprises 472 residues: Ribulose bisphosphate carboxylase large chain (472 aa).

Substrate contacts are provided by asparagine 116 and threonine 166. Residue lysine 168 is the Proton acceptor of the active site. Lysine 170 serves as a coordination point for substrate. Mg(2+) contacts are provided by lysine 194, aspartate 196, and glutamate 197. Residue lysine 194 is modified to N6-carboxylysine. The active-site Proton acceptor is the histidine 287. The substrate site is built by arginine 288, histidine 320, and serine 372.

It belongs to the RuBisCO large chain family. Type I subfamily. As to quaternary structure, heterohexadecamer of 8 large chains and 8 small chains. Requires Mg(2+) as cofactor.

The enzyme catalyses 2 (2R)-3-phosphoglycerate + 2 H(+) = D-ribulose 1,5-bisphosphate + CO2 + H2O. The catalysed reaction is D-ribulose 1,5-bisphosphate + O2 = 2-phosphoglycolate + (2R)-3-phosphoglycerate + 2 H(+). RuBisCO catalyzes two reactions: the carboxylation of D-ribulose 1,5-bisphosphate, the primary event in carbon dioxide fixation, as well as the oxidative fragmentation of the pentose substrate. Both reactions occur simultaneously and in competition at the same active site. In Nitrobacter vulgaris, this protein is Ribulose bisphosphate carboxylase large chain.